The following is a 761-amino-acid chain: T-box protein 1 (761 aa).

Disordered regions lie at residues 1–85 (MLGR…QPLT) and 167–210 (QTDP…CSSP). Polar residues-rich tracts occupy residues 37 to 61 (DLQNTPARSNASTDYSTQSLSNQAG) and 167 to 179 (QTDPANPSGFPQA). Composition is skewed to low complexity over residues 180-191 (SPSDLSTTSSQS) and 198-210 (SSPSVSSSTCSSP). A DNA-binding region (T-box) is located at residues 287-456 (LWRKFHEHRT…HNPFAKGFRD (170 aa)). Residues 496-510 (TTGFPCQTNPTQRSN) show a composition bias toward polar residues. Disordered regions lie at residues 496-515 (TTGFPCQTNPTQRSNGQHEG), 545-612 (SGDA…TPAH), and 637-687 (VCSS…LLTT). The span at 600–612 (GCERSNEKHTPAH) shows a compositional bias: basic and acidic residues. Over residues 637-646 (VCSSDNSNPD) the composition is skewed to polar residues. Low complexity predominate over residues 656 to 687 (SPAGSGSPSVTSGTSLFTSGSSAAPSPPLLTT).

It is found in the nucleus. In terms of biological role, probable transcriptional regulator involved in developmental processes. This is T-box protein 1 (tbr1) from Patiria pectinifera (Starfish).